The following is a 254-amino-acid chain: Imidazole glycerol phosphate synthase subunit HisF (254 aa).

Active-site residues include aspartate 12 and aspartate 131.

The protein belongs to the HisA/HisF family. In terms of assembly, heterodimer of HisH and HisF.

Its subcellular location is the cytoplasm. It carries out the reaction 5-[(5-phospho-1-deoxy-D-ribulos-1-ylimino)methylamino]-1-(5-phospho-beta-D-ribosyl)imidazole-4-carboxamide + L-glutamine = D-erythro-1-(imidazol-4-yl)glycerol 3-phosphate + 5-amino-1-(5-phospho-beta-D-ribosyl)imidazole-4-carboxamide + L-glutamate + H(+). It participates in amino-acid biosynthesis; L-histidine biosynthesis; L-histidine from 5-phospho-alpha-D-ribose 1-diphosphate: step 5/9. Its function is as follows. IGPS catalyzes the conversion of PRFAR and glutamine to IGP, AICAR and glutamate. The HisF subunit catalyzes the cyclization activity that produces IGP and AICAR from PRFAR using the ammonia provided by the HisH subunit. In Rhizorhabdus wittichii (strain DSM 6014 / CCUG 31198 / JCM 15750 / NBRC 105917 / EY 4224 / RW1) (Sphingomonas wittichii), this protein is Imidazole glycerol phosphate synthase subunit HisF.